Consider the following 405-residue polypeptide: Arginine biosynthesis bifunctional protein ArgJ (405 aa).

Residues Thr152, Lys178, Thr189, Glu276, Asn400, and Thr405 each contribute to the substrate site. Residue Thr189 is the Nucleophile of the active site.

The protein belongs to the ArgJ family. Heterotetramer of two alpha and two beta chains.

It is found in the cytoplasm. The catalysed reaction is N(2)-acetyl-L-ornithine + L-glutamate = N-acetyl-L-glutamate + L-ornithine. It catalyses the reaction L-glutamate + acetyl-CoA = N-acetyl-L-glutamate + CoA + H(+). It functions in the pathway amino-acid biosynthesis; L-arginine biosynthesis; L-ornithine and N-acetyl-L-glutamate from L-glutamate and N(2)-acetyl-L-ornithine (cyclic): step 1/1. Its pathway is amino-acid biosynthesis; L-arginine biosynthesis; N(2)-acetyl-L-ornithine from L-glutamate: step 1/4. Functionally, catalyzes two activities which are involved in the cyclic version of arginine biosynthesis: the synthesis of N-acetylglutamate from glutamate and acetyl-CoA as the acetyl donor, and of ornithine by transacetylation between N(2)-acetylornithine and glutamate. The polypeptide is Arginine biosynthesis bifunctional protein ArgJ (Pseudomonas putida (strain ATCC 47054 / DSM 6125 / CFBP 8728 / NCIMB 11950 / KT2440)).